The following is a 463-amino-acid chain: Asparagine--tRNA ligase (463 aa).

The protein belongs to the class-II aminoacyl-tRNA synthetase family. As to quaternary structure, homodimer.

It localises to the cytoplasm. The enzyme catalyses tRNA(Asn) + L-asparagine + ATP = L-asparaginyl-tRNA(Asn) + AMP + diphosphate + H(+). This is Asparagine--tRNA ligase from Desulfitobacterium hafniense (strain Y51).